Reading from the N-terminus, the 632-residue chain is Galactan 5-O-arabinofuranosyltransferase (632 aa).

13 helical membrane passes run 10–30 (QIVL…IAIA), 45–65 (ALTT…GGVW), 76–96 (LGGL…PLGA), 162–182 (WAIT…WQMI), 184–204 (FEYA…YSSP), 206–226 (PYAA…WSGL), 242–259 (GWAT…AATW), 263–282 (LLAY…ATAL), 298–318 (LAGI…PFLA), 344–364 (FPML…LWLI), 375–395 (ALMI…LTTL), 409–429 (LTVL…QSLA), and 434–454 (AVLS…SQDI). Over 455–632 (PNVLRPDLTI…LAIRKPMGNA (178 aa)) the chain is Extracellular.

The protein belongs to the glycosyltransferase 85 family.

The protein localises to the cell membrane. It carries out the reaction Adds an alpha-D-arabinofuranosyl group from trans,octacis-decaprenylphospho-beta-D-arabinofuranose at the 5-O-position of the eighth, tenth and twelfth galactofuranose unit of the galactofuranan chain of [beta-D-galactofuranosyl-(1-&gt;5)-beta-D-galactofuranosyl-(1-&gt;6)]14-beta-D-galactofuranosyl-(1-&gt;5)-beta-D-galactofuranosyl-(1-&gt;4)-alpha-L-rhamnopyranosyl-(1-&gt;3)-N-acetyl-alpha-D-glucosaminyl-diphospho-trans,octacis-decaprenol.. Its pathway is cell wall biogenesis; cell wall polysaccharide biosynthesis. In terms of biological role, involved in the biosynthesis of the arabinogalactan (AG) region of the mycolylarabinogalactan-peptidoglycan (mAGP) complex, an essential component of the mycobacterial cell wall. Catalyzes the addition of the first key arabinofuranosyl (Araf) residue from the sugar donor decaprenyl-phospho-arabinose (DPA) on the C-5 of a 6-linked galactofuranosyl (Galf) of the galactan domain, thus 'priming' the galactan for further elaboration by other arabinofuranosyltransferases. The protein is Galactan 5-O-arabinofuranosyltransferase of Mycobacterium leprae (strain TN).